The sequence spans 457 residues: tRNA modification GTPase MnmE (457 aa).

Positions 23, 85, and 124 each coordinate (6S)-5-formyl-5,6,7,8-tetrahydrofolate. Residues 220 to 376 (GALVVLAGQV…LVTAIRAAVL (157 aa)) enclose the TrmE-type G domain. Asn230 contributes to the K(+) binding site. GTP is bound by residues 230–235 (NAGKSS), 249–255 (TDLPGTT), and 274–277 (DTAG). Ser234 is a binding site for Mg(2+). K(+) is bound by residues Thr249, Leu251, and Thr254. Thr255 lines the Mg(2+) pocket. Lys457 provides a ligand contact to (6S)-5-formyl-5,6,7,8-tetrahydrofolate.

This sequence belongs to the TRAFAC class TrmE-Era-EngA-EngB-Septin-like GTPase superfamily. TrmE GTPase family. In terms of assembly, homodimer. Heterotetramer of two MnmE and two MnmG subunits. K(+) is required as a cofactor.

It localises to the cytoplasm. Exhibits a very high intrinsic GTPase hydrolysis rate. Involved in the addition of a carboxymethylaminomethyl (cmnm) group at the wobble position (U34) of certain tRNAs, forming tRNA-cmnm(5)s(2)U34. The protein is tRNA modification GTPase MnmE of Nitratidesulfovibrio vulgaris (strain ATCC 29579 / DSM 644 / CCUG 34227 / NCIMB 8303 / VKM B-1760 / Hildenborough) (Desulfovibrio vulgaris).